Reading from the N-terminus, the 429-residue chain is Adenylosuccinate synthetase (429 aa).

Residues 12-18 (GDEGKGK) and 40-42 (GHT) each bind GTP. The Proton acceptor role is filled by D13. Mg(2+) is bound by residues D13 and G40. IMP contacts are provided by residues 13-16 (DEGK), 38-41 (NAGH), T127, R141, Q222, T237, and R301. Residue H41 is the Proton donor of the active site. 297 to 303 (ATTGRPR) lines the substrate pocket. Residues R303, 329 to 331 (KLD), and 411 to 413 (SLG) each bind GTP.

Belongs to the adenylosuccinate synthetase family. In terms of assembly, homodimer. It depends on Mg(2+) as a cofactor.

The protein resides in the cytoplasm. The catalysed reaction is IMP + L-aspartate + GTP = N(6)-(1,2-dicarboxyethyl)-AMP + GDP + phosphate + 2 H(+). It functions in the pathway purine metabolism; AMP biosynthesis via de novo pathway; AMP from IMP: step 1/2. Plays an important role in the de novo pathway of purine nucleotide biosynthesis. Catalyzes the first committed step in the biosynthesis of AMP from IMP. In Endomicrobium trichonymphae, this protein is Adenylosuccinate synthetase.